The following is an 803-amino-acid chain: DNA polymerase 2 (803 aa).

The protein belongs to the DNA polymerase type-B family.

The enzyme catalyses DNA(n) + a 2'-deoxyribonucleoside 5'-triphosphate = DNA(n+1) + diphosphate. This chain is DNA polymerase 2 (polB), found in Aeropyrum pernix (strain ATCC 700893 / DSM 11879 / JCM 9820 / NBRC 100138 / K1).